Consider the following 392-residue polypeptide: S-adenosylmethionine decarboxylase proenzyme (392 aa).

Catalysis depends on residues Glu43 and Glu46. Ser100 functions as the Schiff-base intermediate with substrate; via pyruvic acid in the catalytic mechanism. Ser100 carries the post-translational modification Pyruvic acid (Ser); by autocatalysis. Catalysis depends on Cys114, which acts as the Proton donor; for catalytic activity. Active-site proton acceptor; for processing activity residues include Ser264 and His277.

Belongs to the eukaryotic AdoMetDC family. Pyruvate is required as a cofactor. Post-translationally, is synthesized initially as an inactive proenzyme. Formation of the active enzyme involves a self-maturation process in which the active site pyruvoyl group is generated from an internal serine residue via an autocatalytic post-translational modification. Two non-identical subunits are generated from the proenzyme in this reaction, and the pyruvate is formed at the N-terminus of the alpha chain, which is derived from the carboxyl end of the proenzyme. The post-translation cleavage follows an unusual pathway, termed non-hydrolytic serinolysis, in which the side chain hydroxyl group of the serine supplies its oxygen atom to form the C-terminus of the beta chain, while the remainder of the serine residue undergoes an oxidative deamination to produce ammonia and the pyruvoyl group blocking the N-terminus of the alpha chain.

It catalyses the reaction S-adenosyl-L-methionine + H(+) = S-adenosyl 3-(methylsulfanyl)propylamine + CO2. Its pathway is amine and polyamine biosynthesis; S-adenosylmethioninamine biosynthesis; S-adenosylmethioninamine from S-adenosyl-L-methionine: step 1/1. This chain is S-adenosylmethionine decarboxylase proenzyme, found in Leishmania infantum.